The primary structure comprises 916 residues: Nitrate reductase [NADH] 1 (916 aa).

A disordered region spans residues 1 to 77 (MAASVQPRQF…DDEEEEQEDW (77 aa)). A compositionally biased stretch (acidic residues) spans 66 to 76 (GSDDEEEEQED). A Mo-molybdopterin-binding site is contributed by cysteine 192. The Cytochrome b5 heme-binding domain maps to 541–616 (GKQFTMSEVR…LDTYRIGELI (76 aa)). Residues histidine 576 and histidine 599 each coordinate heme. The FAD-binding FR-type domain occupies 656–768 (RDKVPCQLVD…KGPLGHVEYT (113 aa)). FAD is bound by residues 708 to 711 (RAYT), 725 to 729 (LIKVY), phenylalanine 730, phenylalanine 737, 742 to 744 (LMT), serine 792, and threonine 795.

Belongs to the nitrate reductase family. In terms of assembly, homodimer. It depends on FAD as a cofactor. Heme serves as cofactor. Requires Mo-molybdopterin as cofactor.

The catalysed reaction is nitrite + NAD(+) + H2O = nitrate + NADH + H(+). Functionally, nitrate reductase is a key enzyme involved in the first step of nitrate assimilation in plants, fungi and bacteria. The sequence is that of Nitrate reductase [NADH] 1 (NIA1) from Oryza sativa subsp. japonica (Rice).